We begin with the raw amino-acid sequence, 501 residues long: GMP synthase [glutamine-hydrolyzing] (501 aa).

In terms of domain architecture, Glutamine amidotransferase type-1 spans 1–185; sequence MVLVVDYGSQ…LFNVCKLEKN (185 aa). The Nucleophile role is filled by Cys75. Residues His159 and Glu161 contribute to the active site. The 191-residue stretch at 186–376 folds into the GMPS ATP-PPase domain; that stretch reads WKIGDLVEEK…LGIPDRIINR (191 aa). 213–219 provides a ligand contact to ATP; the sequence is SGGVDSS.

As to quaternary structure, homodimer.

It catalyses the reaction XMP + L-glutamine + ATP + H2O = GMP + L-glutamate + AMP + diphosphate + 2 H(+). It participates in purine metabolism; GMP biosynthesis; GMP from XMP (L-Gln route): step 1/1. Functionally, catalyzes the synthesis of GMP from XMP. This Thermotoga petrophila (strain ATCC BAA-488 / DSM 13995 / JCM 10881 / RKU-1) protein is GMP synthase [glutamine-hydrolyzing].